The sequence spans 341 residues: Paired box protein Pax-9 (341 aa).

Positions 4 to 130 (AFGEVNQLGG…SSISRILRNK (127 aa)) form a DNA-binding region, paired. The PAI subdomain stretch occupies residues 7–63 (EVNQLGGVFVNGRPLPNAIRLRIVELAQLGIRPCDISRQLRVSHGCVSKILARYNET). The segment at 82 to 130 (TVVKHIRTYKQRDPGIFAWEIRDRLLADGVCDKYNVPSVSSISRILRNK) is RED subdomain. The segment at 168 to 189 (AAAAKVPTPPGVPAIPGSVAMP) is interaction with KDM5B.

Interacts with KDM5B.

The protein resides in the nucleus. Functionally, transcription factor required for normal development of thymus, parathyroid glands, ultimobranchial bodies, teeth, skeletal elements of skull and larynx as well as distal limbs. The protein is Paired box protein Pax-9 (PAX9) of Propithecus coquereli (Coquerel's sifaka).